We begin with the raw amino-acid sequence, 394 residues long: Xylose isomerase (394 aa).

Catalysis depends on residues His-54 and Asp-57. Residues Glu-180, Glu-216, His-219, Asp-244, Asp-254, Asp-256, and Asp-285 each contribute to the Mg(2+) site. The segment at 370–394 (VRTPRPAGDGPPAGRARLTVAPRKR) is disordered. Low complexity predominate over residues 373 to 386 (PRPAGDGPPAGRAR).

Belongs to the xylose isomerase family. As to quaternary structure, homotetramer. The cofactor is Mg(2+).

The protein resides in the cytoplasm. It carries out the reaction alpha-D-xylose = alpha-D-xylulofuranose. Functionally, involved in D-xylose catabolism. The polypeptide is Xylose isomerase (xylA) (Streptomyces rochei (Streptomyces parvullus)).